The following is a 333-amino-acid chain: ATP synthase subunit a (333 aa).

The signal sequence occupies residues 1 to 32 (MIYLHNKRKGMLKRLSALIVIGLLMNLPAVFA). Transmembrane regions (helical) follow at residues 100–120 (HVVMMWIAAAILLLIMFGVGN), 161–181 (FMPFLLTIFFFILVCNLIGLV), 185–205 (ATATGNINVTATLAIFTFLVT), 229–249 (LMWIIMVPVEFIGLFTKPFAL), 254–274 (FANMTAGHIVIISLLGLIFVF), 279–299 (IAPVSVAFALFIYLLEILVAF), and 300–320 (LQAYIFTLLSALFIGMAVAHE).

Belongs to the ATPase A chain family. In terms of assembly, F-type ATPases have 2 components, CF(1) - the catalytic core - and CF(0) - the membrane proton channel. CF(1) has five subunits: alpha(3), beta(3), gamma(1), delta(1), epsilon(1). CF(0) has four main subunits: a, b, b' and c.

It localises to the cell inner membrane. Key component of the proton channel; it plays a direct role in the translocation of protons across the membrane. The polypeptide is ATP synthase subunit a (Chloroherpeton thalassium (strain ATCC 35110 / GB-78)).